The primary structure comprises 130 residues: Small ribosomal subunit protein uS9 (130 aa).

Belongs to the universal ribosomal protein uS9 family.

The chain is Small ribosomal subunit protein uS9 from Buchnera aphidicola subsp. Acyrthosiphon pisum (strain 5A).